We begin with the raw amino-acid sequence, 371 residues long: Probable alcohol acetyltransferase (371 aa).

Residues serine 124 and histidine 295 each act as charge relay system in the active site. Positions 325-352 are disordered; it reads AKALEESPKESYSRPPAHQQPLHKNDFT. Over residues 327-336 the composition is skewed to basic and acidic residues; sequence ALEESPKESY.

This sequence belongs to the AB hydrolase superfamily.

In terms of biological role, probable alcohol acetyltransferase that uses acetyl-CoA to synthesize acetate esters from various alcohols. Not involved in the synthesis of ethyl acetate. This chain is Probable alcohol acetyltransferase (EAT2), found in Cyberlindnera fabianii (Yeast).